The chain runs to 329 residues: DNA-directed RNA polymerase subunit alpha (329 aa).

The interval 1–235 (MQGSVTEFLK…EQLEAFVDLR (235 aa)) is alpha N-terminal domain (alpha-NTD). The interval 249 to 329 (FDPILLRPVD…NWPPASIADE (81 aa)) is alpha C-terminal domain (alpha-CTD).

Belongs to the RNA polymerase alpha chain family. In terms of assembly, homodimer. The RNAP catalytic core consists of 2 alpha, 1 beta, 1 beta' and 1 omega subunit. When a sigma factor is associated with the core the holoenzyme is formed, which can initiate transcription.

The catalysed reaction is RNA(n) + a ribonucleoside 5'-triphosphate = RNA(n+1) + diphosphate. Its function is as follows. DNA-dependent RNA polymerase catalyzes the transcription of DNA into RNA using the four ribonucleoside triphosphates as substrates. This chain is DNA-directed RNA polymerase subunit alpha, found in Shigella flexneri serotype 5b (strain 8401).